Here is a 400-residue protein sequence, read N- to C-terminus: Acetate kinase (400 aa).

N7 serves as a coordination point for Mg(2+). K14 is an ATP binding site. Position 85 (R85) interacts with substrate. D142 serves as the catalytic Proton donor/acceptor. Residues 202-206 (HLGNG), 278-280 (DMR), and 326-330 (GIGEN) each bind ATP. Mg(2+) is bound at residue E380.

It belongs to the acetokinase family. In terms of assembly, homodimer. It depends on Mg(2+) as a cofactor. Requires Mn(2+) as cofactor.

It localises to the cytoplasm. It carries out the reaction acetate + ATP = acetyl phosphate + ADP. The protein operates within metabolic intermediate biosynthesis; acetyl-CoA biosynthesis; acetyl-CoA from acetate: step 1/2. Its function is as follows. Catalyzes the formation of acetyl phosphate from acetate and ATP. Can also catalyze the reverse reaction. The protein is Acetate kinase of Deinococcus deserti (strain DSM 17065 / CIP 109153 / LMG 22923 / VCD115).